We begin with the raw amino-acid sequence, 155 residues long: Protein-export protein SecB (155 aa).

Belongs to the SecB family. As to quaternary structure, homotetramer, a dimer of dimers. One homotetramer interacts with 1 SecA dimer.

The protein localises to the cytoplasm. Its function is as follows. One of the proteins required for the normal export of preproteins out of the cell cytoplasm. It is a molecular chaperone that binds to a subset of precursor proteins, maintaining them in a translocation-competent state. It also specifically binds to its receptor SecA. The sequence is that of Protein-export protein SecB from Psychromonas ingrahamii (strain DSM 17664 / CCUG 51855 / 37).